The chain runs to 209 residues: Thymidylate kinase (209 aa).

7 to 14 (GVEGSGKS) provides a ligand contact to ATP.

This sequence belongs to the thymidylate kinase family.

It carries out the reaction dTMP + ATP = dTDP + ADP. Phosphorylation of dTMP to form dTDP in both de novo and salvage pathways of dTTP synthesis. The sequence is that of Thymidylate kinase from Solidesulfovibrio magneticus (strain ATCC 700980 / DSM 13731 / RS-1) (Desulfovibrio magneticus).